The primary structure comprises 256 residues: GDSL esterase/lipase At1g18120 (256 aa).

Residues 1–49 (MYRVYKNNKFILISIPRITNKLWQKNCNLVILLGVLLVLTLFHDPIIVA) form the signal peptide. The Nucleophile role is filled by S67. A glycan (N-linked (GlcNAc...) asparagine) is linked at N181.

It belongs to the 'GDSL' lipolytic enzyme family.

It localises to the secreted. In Arabidopsis thaliana (Mouse-ear cress), this protein is GDSL esterase/lipase At1g18120.